A 31-amino-acid chain; its full sequence is U13-ctenitoxin-Pn1b (31 aa).

Disulfide bonds link C3–C17, C10–C21, and C16–C30.

As to expression, expressed by the venom gland.

Its subcellular location is the secreted. Functionally, acts as a neurotoxin. The chain is U13-ctenitoxin-Pn1b from Phoneutria nigriventer (Brazilian armed spider).